Consider the following 239-residue polypeptide: Purine nucleoside phosphorylase DeoD-type (239 aa).

An a purine D-ribonucleoside-binding site is contributed by His-5. Residues Gly-21, Arg-25, Arg-44, and 88–91 contribute to the phosphate site; that span reads RVGS. A purine D-ribonucleoside contacts are provided by residues 180 to 182 and 204 to 205; these read EME and SD. Asp-205 serves as the catalytic Proton donor.

The protein belongs to the PNP/UDP phosphorylase family. As to quaternary structure, homohexamer; trimer of homodimers.

It catalyses the reaction a purine D-ribonucleoside + phosphate = a purine nucleobase + alpha-D-ribose 1-phosphate. The enzyme catalyses a purine 2'-deoxy-D-ribonucleoside + phosphate = a purine nucleobase + 2-deoxy-alpha-D-ribose 1-phosphate. Its function is as follows. Catalyzes the reversible phosphorolytic breakdown of the N-glycosidic bond in the beta-(deoxy)ribonucleoside molecules, with the formation of the corresponding free purine bases and pentose-1-phosphate. The chain is Purine nucleoside phosphorylase DeoD-type from Salmonella heidelberg (strain SL476).